Reading from the N-terminus, the 490-residue chain is Protein lag-3 (490 aa).

Disordered stretches follow at residues 18 to 55, 105 to 155, 213 to 235, 307 to 362, and 391 to 490; these read PSVA…EDEP, EDEE…PTSE, SSAD…SPAE, SSSE…MQRI, and QQQQ…ANIN. Over residues 105–119 the composition is skewed to basic and acidic residues; sequence EDEERKRVEQQKNKE. Over residues 122 to 138 the composition is skewed to polar residues; it reads NASTSAPTSSRNGGQSV. Polar residues predominate over residues 307 to 318; it reads SSSESPTKQSPM. Low complexity-rich tracts occupy residues 341–359, 391–404, and 413–456; these read QLQQ…QQEM, QQQQ…HHQM, and QAHQ…HHQM.

In terms of assembly, component of a complex consisting of at least a lin-12/Notch intracellular domain (NICD), lag-1, and lag-3. Interacts with a NICD of lin-12/Notch or glp-1/Notch; the interactions are direct. Expressed in the progenitor zone and the early pachytene region of the hermaphrodite gonad.

The protein resides in the nucleus. Its function is as follows. glp-1/Notch and lin-12/Notch proteins promote signaling by recruiting lag-3 to target promoters, where it functions as a transcriptional activator, probably as part of a complex with a Notch intracellular domain (NICD) and the transcription regulator lag-1. Involved in the p53-mediated germ-cell apoptotic response to DNA damage, perhaps acting as a transcriptional activator. May regulate phosphatase lip-1 mRNA transcription downstream of glp-1. This chain is Protein lag-3 (sel-8), found in Caenorhabditis elegans.